The following is a 442-amino-acid chain: Choline monooxygenase, chloroplastic (442 aa).

The transit peptide at 1-58 (MASSASMLINYPTTFCGVRNSSNPNNDQFSDQINIPSSLNNNINISKITSKTNKIIPK) directs the protein to the chloroplast. The 107-residue stretch at 123 to 229 (WQVAGYSDQI…VAIWGPFVLI (107 aa)) folds into the Rieske domain. [2Fe-2S] cluster is bound by residues C165, H167, C184, and H187. H290 and H295 together coordinate Fe cation.

This sequence belongs to the choline monooxygenase family. It depends on [2Fe-2S] cluster as a cofactor. Fe cation serves as cofactor. The cofactor is Mg(2+).

The protein localises to the plastid. It localises to the chloroplast stroma. The enzyme catalyses choline + 2 reduced [2Fe-2S]-[ferredoxin] + O2 + 2 H(+) = betaine aldehyde hydrate + 2 oxidized [2Fe-2S]-[ferredoxin] + H2O. It functions in the pathway amine and polyamine biosynthesis; betaine biosynthesis via choline pathway; betaine aldehyde from choline (monooxygenase route): step 1/1. In terms of biological role, catalyzes the first step of the osmoprotectant glycine betaine synthesis. The protein is Choline monooxygenase, chloroplastic (CMO) of Amaranthus tricolor (Joseph's coat).